The sequence spans 122 residues: Small ribosomal subunit protein bS6 (122 aa).

The protein belongs to the bacterial ribosomal protein bS6 family.

Functionally, binds together with bS18 to 16S ribosomal RNA. This Neisseria meningitidis serogroup C (strain 053442) protein is Small ribosomal subunit protein bS6.